Here is a 387-residue protein sequence, read N- to C-terminus: Phosphoglycerate kinase (387 aa).

Residues 21–23 (DLN), Arg-36, 59–62 (HLGR), Arg-113, and Arg-146 each bind substrate. Residues Lys-197, Glu-314, and 340–343 (GGDT) each bind ATP.

Belongs to the phosphoglycerate kinase family. In terms of assembly, monomer.

It is found in the cytoplasm. The enzyme catalyses (2R)-3-phosphoglycerate + ATP = (2R)-3-phospho-glyceroyl phosphate + ADP. Its pathway is carbohydrate degradation; glycolysis; pyruvate from D-glyceraldehyde 3-phosphate: step 2/5. This Enterobacter sp. (strain 638) protein is Phosphoglycerate kinase.